Reading from the N-terminus, the 292-residue chain is Ribosomal protein L11 methyltransferase (292 aa).

Residues Thr-145, Gly-166, Asp-188, and Asn-229 each contribute to the S-adenosyl-L-methionine site.

This sequence belongs to the methyltransferase superfamily. PrmA family.

It localises to the cytoplasm. It carries out the reaction L-lysyl-[protein] + 3 S-adenosyl-L-methionine = N(6),N(6),N(6)-trimethyl-L-lysyl-[protein] + 3 S-adenosyl-L-homocysteine + 3 H(+). In terms of biological role, methylates ribosomal protein L11. The chain is Ribosomal protein L11 methyltransferase from Pseudoalteromonas atlantica (strain T6c / ATCC BAA-1087).